A 335-amino-acid polypeptide reads, in one-letter code: Nod factor export ATP-binding protein I (335 aa).

The ABC transporter domain occupies 37-267 (IDVASVTKSY…KIGCQVIEIY (231 aa)). 69–76 (GPNGAGKS) is a binding site for ATP.

This sequence belongs to the ABC transporter superfamily. Lipooligosaccharide exporter (TC 3.A.1.102) family. In terms of assembly, the complex is composed of two ATP-binding proteins (NodI) and two transmembrane proteins (NodJ).

Its subcellular location is the cell inner membrane. In terms of biological role, part of the ABC transporter complex NodIJ involved in the export of the nodulation factors (Nod factors), the bacterial signal molecules that induce symbiosis and subsequent nodulation induction. Nod factors are LCO (lipo-chitin oligosaccharide), a modified beta-1,4-linked N-acetylglucosamine oligosaccharide. This subunit is responsible for energy coupling to the transport system. This chain is Nod factor export ATP-binding protein I, found in Rhizobium meliloti (strain 1021) (Ensifer meliloti).